Reading from the N-terminus, the 482-residue chain is uncharacterized protein (482 aa).

12 helical membrane-spanning segments follow: residues 40-57 (LDWY…LSFL), 83-103 (AAVS…VLLV), 109-129 (HYYL…TCFV), 140-160 (LLLG…ISMT), 170-190 (LAYL…IATG), 205-225 (WLYI…LFCL), 278-298 (VIQF…PSIL), 311-331 (YMSV…CLLS), 338-358 (GWFI…LLAT), 366-386 (VATY…ITWI), 399-418 (ALGC…GQVY), and 428-448 (GFAL…RFYL).

It belongs to the major facilitator superfamily. Allantoate permease family.

Its subcellular location is the endoplasmic reticulum. It is found in the membrane. This is an uncharacterized protein from Schizosaccharomyces pombe (strain 972 / ATCC 24843) (Fission yeast).